Reading from the N-terminus, the 332-residue chain is DNA-directed RNA polymerase subunit alpha (332 aa).

The alpha N-terminal domain (alpha-NTD) stretch occupies residues 1–234 (MTVTANQVLR…DQLSVFGDFT (234 aa)). The alpha C-terminal domain (alpha-CTD) stretch occupies residues 248–332 (VDPVLLRPID…AGVASHGMLG (85 aa)).

It belongs to the RNA polymerase alpha chain family. In terms of assembly, homodimer. The RNAP catalytic core consists of 2 alpha, 1 beta, 1 beta' and 1 omega subunit. When a sigma factor is associated with the core the holoenzyme is formed, which can initiate transcription.

The catalysed reaction is RNA(n) + a ribonucleoside 5'-triphosphate = RNA(n+1) + diphosphate. Its function is as follows. DNA-dependent RNA polymerase catalyzes the transcription of DNA into RNA using the four ribonucleoside triphosphates as substrates. In Stenotrophomonas maltophilia (strain K279a), this protein is DNA-directed RNA polymerase subunit alpha.